The chain runs to 282 residues: Undecaprenyl-diphosphatase (282 aa).

6 consecutive transmembrane segments (helical) span residues 51-71, 87-107, 115-135, 191-211, 229-249, and 259-279; these read TLVAVLLYFWKDIFIIVAAVI, MGWMIVAGTIPIVIFGKLFET, SLYWISGSLIGLAIILFLAEG, ATAARFSFLLSLPAVFAAGLY, NILVATLVAGIVGYASIAFLL, and IFIAYRLVAGTAILYLVATGV.

The protein belongs to the UppP family.

The protein resides in the cell inner membrane. The catalysed reaction is di-trans,octa-cis-undecaprenyl diphosphate + H2O = di-trans,octa-cis-undecaprenyl phosphate + phosphate + H(+). In terms of biological role, catalyzes the dephosphorylation of undecaprenyl diphosphate (UPP). Confers resistance to bacitracin. The polypeptide is Undecaprenyl-diphosphatase (Pelodictyon phaeoclathratiforme (strain DSM 5477 / BU-1)).